Consider the following 438-residue polypeptide: 2-(3-amino-3-carboxypropyl)histidine synthase subunit 1 (438 aa).

[4Fe-4S] cluster is bound by residues Cys110, Cys214, and Cys342. A Phosphoserine modification is found at Ser418.

Belongs to the DPH1/DPH2 family. DPH1 subfamily. Component of the 2-(3-amino-3-carboxypropyl)histidine synthase complex composed of DPH1, DPH2, DPH3 and a NADH-dependent reductase. Interacts with DPH2 and RBM8A. Requires [4Fe-4S] cluster as cofactor.

The protein resides in the nucleus. It is found in the cytoplasm. The catalysed reaction is L-histidyl-[translation elongation factor 2] + S-adenosyl-L-methionine = 2-[(3S)-amino-3-carboxypropyl]-L-histidyl-[translation elongation factor 2] + S-methyl-5'-thioadenosine + H(+). It functions in the pathway protein modification; peptidyl-diphthamide biosynthesis. Functionally, catalyzes the first step of diphthamide biosynthesis, a post-translational modification of histidine which occurs in elongation factor 2. DPH1 and DPH2 transfer a 3-amino-3-carboxypropyl (ACP) group from S-adenosyl-L-methionine (SAM) to a histidine residue, the reaction is assisted by a reduction system comprising DPH3 and a NADH-dependent reductase. The chain is 2-(3-amino-3-carboxypropyl)histidine synthase subunit 1 (DPH1) from Bos taurus (Bovine).